A 90-amino-acid polypeptide reads, in one-letter code: Probable Fe(2+)-trafficking protein (90 aa).

The protein belongs to the Fe(2+)-trafficking protein family.

In terms of biological role, could be a mediator in iron transactions between iron acquisition and iron-requiring processes, such as synthesis and/or repair of Fe-S clusters in biosynthetic enzymes. The polypeptide is Probable Fe(2+)-trafficking protein (Delftia acidovorans (strain DSM 14801 / SPH-1)).